A 352-amino-acid chain; its full sequence is Threonine synthase (352 aa).

K59 is modified (N6-(pyridoxal phosphate)lysine). Residues N85, 185-189 (GNAGN), and T314 contribute to the pyridoxal 5'-phosphate site.

It belongs to the threonine synthase family. Pyridoxal 5'-phosphate serves as cofactor.

The catalysed reaction is O-phospho-L-homoserine + H2O = L-threonine + phosphate. It participates in amino-acid biosynthesis; L-threonine biosynthesis; L-threonine from L-aspartate: step 5/5. Its function is as follows. Catalyzes the gamma-elimination of phosphate from L-phosphohomoserine and the beta-addition of water to produce L-threonine. This Bacillus sp. (strain ULM1) protein is Threonine synthase (thrC).